The primary structure comprises 152 residues: MTPTLDTKYVFTITARIGDVVTAGETGIGVRRIIPIIGGEVTGAVTGKVLPFGADFQTIRPNELIDLEAKYAFETADGAIVYVENKGIRFGPVELLQELKRGEPVDPKLIYFRTVPRFETGHEKYRWLMEHIFVASAARHADRVVIDVHQVM.

The protein belongs to the UPF0311 family.

This Bradyrhizobium diazoefficiens (strain JCM 10833 / BCRC 13528 / IAM 13628 / NBRC 14792 / USDA 110) protein is UPF0311 protein blr7842.